Consider the following 121-residue polypeptide: Dihydroneopterin aldolase (121 aa).

Residues Glu22, Tyr54, and 73-74 (IE) each bind substrate. Lys100 serves as the catalytic Proton donor/acceptor.

The protein belongs to the DHNA family. Homooctamer. Four molecules assemble into a ring, and two rings come together to give a cylinder with a hole of at least 13 a diameter.

It carries out the reaction 7,8-dihydroneopterin = 6-hydroxymethyl-7,8-dihydropterin + glycolaldehyde. It catalyses the reaction 7,8-dihydroneopterin = 7,8-dihydromonapterin. It functions in the pathway cofactor biosynthesis; tetrahydrofolate biosynthesis; 2-amino-4-hydroxy-6-hydroxymethyl-7,8-dihydropteridine diphosphate from 7,8-dihydroneopterin triphosphate: step 3/4. Its function is as follows. Catalyzes the conversion of 7,8-dihydroneopterin to 6-hydroxymethyl-7,8-dihydropterin. Can also catalyze the epimerization of carbon 2' of dihydroneopterin to dihydromonapterin. The sequence is that of Dihydroneopterin aldolase (folB) from Staphylococcus epidermidis (strain ATCC 35984 / DSM 28319 / BCRC 17069 / CCUG 31568 / BM 3577 / RP62A).